The sequence spans 524 residues: Strychnine-10-hydroxylase (524 aa).

Residues 6-26 (LYIHTAILGLISLFLILHFVF) form a helical membrane-spanning segment. C466 contributes to the heme binding site.

The protein belongs to the cytochrome P450 family. It depends on heme as a cofactor.

It localises to the membrane. The catalysed reaction is strychnine + reduced [NADPH--hemoprotein reductase] + O2 = 10-hydroxystrychnine + oxidized [NADPH--hemoprotein reductase] + H2O + H(+). Its pathway is alkaloid biosynthesis. Functionally, monooxygenase involved in the biosynthesis of curare monoterpene indole alkaloids (MIAs), natural products such as strychnine, a neurotoxic compound used as a pesticide to control rodents, and its pharmacologically active derivatives, including brucine, used to regulate blood pressure. Curare alkaloids act as animal glycine receptor antagonists. Catalyzes the conversion of strychnine to 10-OH strychnine. The chain is Strychnine-10-hydroxylase from Strychnos nux-vomica (Poison nut).